A 589-amino-acid chain; its full sequence is Aspartate--tRNA ligase (589 aa).

Glu174 is a binding site for L-aspartate. Residues 198 to 201 (QLFK) form an aspartate region. Arg220 is a binding site for L-aspartate. ATP contacts are provided by residues 220–222 (RDE) and Gln229. His448 provides a ligand contact to L-aspartate. Glu483 lines the ATP pocket. Position 490 (Arg490) interacts with L-aspartate. An ATP-binding site is contributed by 535 to 538 (GIDR).

It belongs to the class-II aminoacyl-tRNA synthetase family. Type 1 subfamily. As to quaternary structure, homodimer.

It is found in the cytoplasm. The catalysed reaction is tRNA(Asp) + L-aspartate + ATP = L-aspartyl-tRNA(Asp) + AMP + diphosphate. Functionally, catalyzes the attachment of L-aspartate to tRNA(Asp) in a two-step reaction: L-aspartate is first activated by ATP to form Asp-AMP and then transferred to the acceptor end of tRNA(Asp). This is Aspartate--tRNA ligase from Xylella fastidiosa (strain M23).